The chain runs to 522 residues: Na(+)/H(+) antiporter NhaB (522 aa).

The next 9 membrane-spanning stretches (helical) occupy residues 13 to 33, 98 to 118, 140 to 160, 239 to 259, 304 to 324, 356 to 376, 390 to 410, 446 to 466, and 477 to 497; these read FLGNSPDWYKLAIMGFLIINP, LLLVFMVAGIYFMKQLLLFVF, AFLSAFLDALTVIAVVISVSV, FFIRMLPVTLPVFIFGLLVCL, AIIGVWLVLALHLAEVGLVGL, LTVFFAVVAVIIEQSLFTPII, LFYLFNGLLSSVSDNVFVGTV, ATPNGQAAFLFLLTSALAPLI, and ALPYTLVMTIVGLLGVEFLLV.

Belongs to the NhaB Na(+)/H(+) (TC 2.A.34) antiporter family.

The protein resides in the cell inner membrane. The enzyme catalyses 2 Na(+)(in) + 3 H(+)(out) = 2 Na(+)(out) + 3 H(+)(in). Its function is as follows. Na(+)/H(+) antiporter that extrudes sodium in exchange for external protons. This is Na(+)/H(+) antiporter NhaB from Yersinia pestis bv. Antiqua (strain Angola).